Reading from the N-terminus, the 348-residue chain is Fe-S cluster assembly protein DRE2 (348 aa).

Residues 1 to 158 (MSQYKTGLLL…LPTFKKASSS (158 aa)) are N-terminal SAM-like domain. The disordered stretch occupies residues 137-170 (KTNNTKLQSGSKLPTFKKASSSTSNLPSFKKADH). Polar residues predominate over residues 144 to 163 (QSGSKLPTFKKASSSTSNLP). The interval 159–242 (TSNLPSFKKA…EEELIDEDGS (84 aa)) is linker. A Phosphoserine modification is found at serine 206. The [2Fe-2S] cluster site is built by cysteine 252, cysteine 263, cysteine 266, and cysteine 268. A fe-S binding site A region spans residues 252–268 (CGKSKTKKKKACKDCTC). [4Fe-4S] cluster is bound by residues cysteine 311, cysteine 314, cysteine 322, and cysteine 325. 2 short sequence motifs (cx2C motif) span residues 311 to 314 (CGSC) and 322 to 325 (CSGC). Residues 311 to 325 (CGSCSLGDAFRCSGC) are fe-S binding site B.

The protein belongs to the anamorsin family. As to quaternary structure, monomer. Interacts with TAH18. Interacts with MIA40. The cofactor is [2Fe-2S] cluster. [4Fe-4S] cluster serves as cofactor. In terms of processing, ubiquitinated.

The protein localises to the cytoplasm. Its subcellular location is the mitochondrion intermembrane space. Component of the cytosolic iron-sulfur (Fe-S) protein assembly (CIA) machinery required for the maturation of extramitochondrial Fe-S proteins. Part of an electron transfer chain functioning in an early step of cytosolic Fe-S biogenesis, facilitating the de novo assembly of a [4Fe-4S] cluster on the scaffold complex CFD1-NBP35. Electrons are transferred to DRE2 from NADPH via the FAD- and FMN-containing protein TAH18. TAH18-DRE2 are also required for the assembly of the diferric tyrosyl radical cofactor of ribonucleotide reductase (RNR), probably by providing electrons for reduction during radical cofactor maturation in the catalytic small subunit RNR2. Has anti-apoptotic effects in the cell. Involved in negative control of H(2)O(2)-induced cell death. The protein is Fe-S cluster assembly protein DRE2 of Saccharomyces cerevisiae (strain ATCC 204508 / S288c) (Baker's yeast).